A 1732-amino-acid polypeptide reads, in one-letter code: Transient receptor potential cation channel subfamily M member 3 (1732 aa).

Residues 1–894 lie on the Cytoplasmic side of the membrane; it reads MPGPWGTVYF…RKIYEFYNAP (894 aa). Calmodulin-binding regions lie at residues 41 to 64, 192 to 215, 300 to 323, 601 to 624, and 793 to 816; these read WTIR…QKSW, NFEL…MTTG, TGKY…QKIN, RKRF…KLLG, and RKNS…LEFK. Residues 617–625 are required for the inhibitory action of G-beta/gamma-subunits of heterotrimeric G-proteins; sequence PKALKLLGM. Ser-796 provides a ligand contact to 1,2-dioctanoyl-sn-glycero-3-phospho-(1D-myo-inositol-4,5-bisphosphate). A disordered region spans residues 829–851; the sequence is EIHLQEKEPEEPEKPTKEKDEED. Basic and acidic residues predominate over residues 831 to 847; sequence HLQEKEPEEPEKPTKEK. Residues 895-918 traverse the membrane as a helical segment; it reads IVKFWFYTLAYIGYLMLFNYIVLV. The Extracellular segment spans residues 919–925; that stretch reads KMERWPS. Residues 926 to 948 form a helical membrane-spanning segment; that stretch reads TQEWIVISYIFTLGIEKMREILM. Over 949–964 the chain is Cytoplasmic; sequence SEPGKLLQKVKVWLQE. The chain crosses the membrane as a helical span at residues 965–985; sequence YWNVTDLIAILLFSVGMILRL. The Extracellular segment spans residues 986–989; it reads QDQP. Residues 990-1013 form a helical membrane-spanning segment; it reads FRSDGRVIYCVNIIYWYIRLLDIF. Residues 1014–1028 are Cytoplasmic-facing; it reads GVNKYLGPYVMMIGK. 2 residues coordinate 1,2-dioctanoyl-sn-glycero-3-phospho-(1D-myo-inositol-4,5-bisphosphate): Lys-1017 and Tyr-1018. Residues 1029 to 1056 form a helical membrane-spanning segment; it reads MMIDMMYFVIIMLVVLMSFGVARQAILF. The Extracellular segment spans residues 1057-1073; sequence PNEEPSWKLAKNIFYMP. The segment at residues 1074–1101 is an intramembrane region (pore-forming); the sequence is YWMIYGEVFADQIDPPCGQNETREDGKT. The Extracellular segment spans residues 1102 to 1111; the sequence is IQLPPCKTGA. The chain crosses the membrane as a helical span at residues 1112 to 1137; the sequence is WIVPAIMACYLLVANILLVNLLIAVF. The Cytoplasmic segment spans residues 1138–1732; it reads NNTFFEVKSI…AFHSFESKHN (595 aa). The segment at 1610 to 1732 is disordered; it reads EREAELSHPS…AFHSFESKHN (123 aa). Composition is skewed to polar residues over residues 1635 to 1653 and 1690 to 1701; these read PISS…NNIT and NTASLRNPFQRS.

It belongs to the transient receptor (TC 1.A.4) family. LTrpC subfamily. TRPM3 sub-subfamily. In terms of assembly, homotetramer. Interacts with TRPM1; the interaction results in the formation of a heteromultimeric cation channel complex that are functionally different from the homomeric channels.

The protein resides in the cell membrane. It catalyses the reaction Ca(2+)(in) = Ca(2+)(out). The enzyme catalyses Mn(2+)(in) = Mn(2+)(out). The catalysed reaction is Zn(2+)(in) = Zn(2+)(out). It carries out the reaction Mg(2+)(in) = Mg(2+)(out). It catalyses the reaction Na(+)(in) = Na(+)(out). Its activity is regulated as follows. Activated by the neurosteroid pregnelonone sulfate (PregS). PregS activates the channel by shifting its current-voltage activation curve toward more negative membrane potentials and also potentiates temperature-induced activation. Activated by heat. Intracellular Ca(2+) inhibits TRPM3 probably via interaction with Ca(2+)/calmodulin. Intracellular Mg(2+) inhibits TRPM3 activity. Both intracellular and extracellular protons block TRPM3 through propable binding sites in the pore region. Positively regulated by phosphoinositide phosphoinositol 4,5-biphosphate (PI(4,5)P2). Strongly inhibited by activation of G(i)-coupled receptors via direct binding with G-beta/gamma-subunits of heterotrimeric G-proteins. With respect to regulation, insensitive to pregnenolone sulfate (PregS) or heat. Not inhibited by G-beta/gamma-subunits of heterotrimeric G-proteins. Constitutively active, non-selective divalent cation-conducting channel that is permeable to Ca(2+), Mn(2+), and Mg(2+), with a high permeability for Ca(2+). However, can be enhanced by increasing temperature and by ligands, including the endogenous neurosteroid pregnenolone sulfate and sphingosine-1 and suppressed by intracellular Mg(2+). Implicated in a variety of cellular processes, including insulin/peptide secretion, vascular constriction and dilation, noxious heat sensing, inflammatory and spontaneous pain sensitivity. In neurons of the dorsal root ganglia, functions as thermosensitive channel for the detection of noxious heat and spontaneous pain. Suggested to function as an ionotropic steroid receptor in beta-cell, indeed pregnenolone sulfate leads to Ca(2+) influx and enhanced insulin secretion. Mediates Zn(2+) uptake into the lumen of pancreatic beta cell secretory granules, thereby regulating insulin secretion. Forms heteromultimeric ion channels with TRPM1 which are permeable for Ca(2+) and Zn(2+) ions. Exists as multiple splice variants which differ significantly in their biophysical properties. Functionally, displays strongly reduced permeability for divalent cations and high selectivity toward monovalent cations. In terms of biological role, no channel activity. This is Transient receptor potential cation channel subfamily M member 3 from Mus musculus (Mouse).